The primary structure comprises 356 residues: 5-formaminoimidazole-4-carboxamide-1-(beta)-D-ribofuranosyl 5'-monophosphate synthetase (356 aa).

Residues His-27 and Ser-94 each contribute to the 5-amino-1-(5-phospho-beta-D-ribosyl)imidazole-4-carboxamide site. Positions 101 to 333 constitute an ATP-grasp domain; that stretch reads TENFADMAVP…YADLMEENLS (233 aa). ATP-binding positions include 145-196 and Glu-226; that span reads PHDI…TRYY. Asn-255 contacts 5-amino-1-(5-phospho-beta-D-ribosyl)imidazole-4-carboxamide. Mg(2+) is bound by residues Glu-293 and Glu-306.

This sequence belongs to the phosphohexose mutase family. The cofactor is Mg(2+). Mn(2+) serves as cofactor.

The enzyme catalyses 5-amino-1-(5-phospho-beta-D-ribosyl)imidazole-4-carboxamide + formate + ATP = 5-formamido-1-(5-phospho-D-ribosyl)imidazole-4-carboxamide + ADP + phosphate. Its pathway is purine metabolism; IMP biosynthesis via de novo pathway; 5-formamido-1-(5-phospho-D-ribosyl)imidazole-4-carboxamide from 5-amino-1-(5-phospho-D-ribosyl)imidazole-4-carboxamide (formate route): step 1/1. In terms of biological role, catalyzes the ATP- and formate-dependent formylation of 5-aminoimidazole-4-carboxamide-1-beta-d-ribofuranosyl 5'-monophosphate (AICAR) to 5-formaminoimidazole-4-carboxamide-1-beta-d-ribofuranosyl 5'-monophosphate (FAICAR) in the absence of folates. The polypeptide is 5-formaminoimidazole-4-carboxamide-1-(beta)-D-ribofuranosyl 5'-monophosphate synthetase (Methanosarcina barkeri (strain Fusaro / DSM 804)).